A 183-amino-acid chain; its full sequence is dCTP deaminase (183 aa).

DCTP contacts are provided by residues 97–102 (RSSFAR) and Asp113. The Proton donor/acceptor role is filled by Glu123. The dCTP site is built by Tyr155 and Gln162.

This sequence belongs to the dCTP deaminase family. In terms of assembly, homotrimer.

The enzyme catalyses dCTP + H2O + H(+) = dUTP + NH4(+). Its pathway is pyrimidine metabolism; dUMP biosynthesis; dUMP from dCTP (dUTP route): step 1/2. Its function is as follows. Catalyzes the deamination of dCTP to dUTP. This chain is dCTP deaminase, found in Sulfurisphaera tokodaii (strain DSM 16993 / JCM 10545 / NBRC 100140 / 7) (Sulfolobus tokodaii).